A 58-amino-acid chain; its full sequence is Ribosome biogenesis protein Nop10 (58 aa).

The protein belongs to the NOP10 family.

Its function is as follows. Involved in ribosome biogenesis; more specifically in 18S rRNA pseudouridylation and in cleavage of pre-rRNA. The sequence is that of Ribosome biogenesis protein Nop10 from Thermococcus onnurineus (strain NA1).